Consider the following 348-residue polypeptide: Cell surface glycoprotein CD200 receptor 1 (348 aa).

The first 24 residues, 1–24, serve as a signal peptide directing secretion; that stretch reads MLCPWRTANLGLLLILTIFLVAEA. Over 29–265 the chain is Extracellular; the sequence is QPNNSLMLQT…PVPGAKKSAK (237 aa). N-linked (GlcNAc...) asparagine glycosylation is found at Asn31, Asn60, Asn69, Asn116, Asn122, Asn185, Asn218, Asn233, and Asn247. Intrachain disulfides connect Cys83/Cys155 and Cys107/Cys123. The Ig-like C2-type domain maps to 160–251; sequence PDGNFHRGYH…SHLTGNKSLY (92 aa). 2 cysteine pairs are disulfide-bonded: Cys190–Cys239 and Cys209–Cys227. A helical transmembrane segment spans residues 266–286; that stretch reads LYIPYIILTIIILTIVGFIWL. The Cytoplasmic segment spans residues 287–348; that stretch reads LKVNGCRKYK…SEVDTDLHTL (62 aa).

This sequence belongs to the CD200R family. In terms of assembly, CD200 and CD200R1 interact via their respective N-terminal Ig-like domains. Interacts with Human herpesvirus 8 vOX2 protein. (Microbial infection) Interacts with human herpesvirus 8/HHV-8 protein vOX2/K14. Expressed in granulocytes, monocytes, most T-cells, neutrophils, basophils and a subset of NK, NKT and B-cells (at protein level). Expressed in bone marrow, lymph nodes, spleen, lung, liver, spinal cord, kidney. Expressed in monocyte-derived dendritic and mast cells.

It localises to the cell membrane. Its subcellular location is the secreted. Functionally, inhibitory receptor for the CD200/OX2 cell surface glycoprotein. Limits inflammation by inhibiting the expression of pro-inflammatory molecules including TNF-alpha, interferons, and inducible nitric oxide synthase (iNOS) in response to selected stimuli. Also binds to HHV-8 K14 viral CD200 homolog with identical affinity and kinetics as the host CD200. The polypeptide is Cell surface glycoprotein CD200 receptor 1 (CD200R1) (Homo sapiens (Human)).